The sequence spans 40 residues: Photosystem II reaction center protein J (40 aa).

The helical transmembrane segment at 8–28 threads the bilayer; it reads IPLWIIGTVAGILVIGLIGIF.

The protein belongs to the PsbJ family. As to quaternary structure, PSII is composed of 1 copy each of membrane proteins PsbA, PsbB, PsbC, PsbD, PsbE, PsbF, PsbH, PsbI, PsbJ, PsbK, PsbL, PsbM, PsbT, PsbX, PsbY, PsbZ, Psb30/Ycf12, at least 3 peripheral proteins of the oxygen-evolving complex and a large number of cofactors. It forms dimeric complexes.

It is found in the plastid. The protein localises to the chloroplast thylakoid membrane. In terms of biological role, one of the components of the core complex of photosystem II (PSII). PSII is a light-driven water:plastoquinone oxidoreductase that uses light energy to abstract electrons from H(2)O, generating O(2) and a proton gradient subsequently used for ATP formation. It consists of a core antenna complex that captures photons, and an electron transfer chain that converts photonic excitation into a charge separation. This is Photosystem II reaction center protein J from Nicotiana sylvestris (Wood tobacco).